Consider the following 100-residue polypeptide: Large ribosomal subunit protein eL14 (100 aa).

It belongs to the eukaryotic ribosomal protein eL14 family.

The chain is Large ribosomal subunit protein eL14 from Aeropyrum pernix (strain ATCC 700893 / DSM 11879 / JCM 9820 / NBRC 100138 / K1).